Consider the following 493-residue polypeptide: Voltage-gated potassium channel regulatory subunit KCNF1 (493 aa).

The Cytoplasmic portion of the chain corresponds to 1–183; the sequence is MDASAEQSLP…KPESSCPARV (183 aa). A helical membrane pass occupies residues 184–204; the sequence is VAVLSFLLILVSSVVMCMGTI. At 205–223 the chain is on the extracellular side; sequence PELQVVDSEGNRVEHPTLE. The chain crosses the membrane as a helical span at residues 224-244; sequence NVETACIGWFTLEYLLRLFSS. At 245–249 the chain is on the cytoplasmic side; sequence PNKLH. The helical transmembrane segment at 250–270 threads the bilayer; the sequence is FALSFMNIVDVLAILPFYVSL. Residues 271–289 are Extracellular-facing; that stretch reads TLTHLGARMMELTNVQQAV. The chain crosses the membrane as a helical; Voltage-sensor span at residues 290–310; it reads QALRIMRIARIFKLARHSSGL. The Cytoplasmic segment spans residues 311 to 324; sequence QTLTYALKRSFKEL. A helical transmembrane segment spans residues 325–345; it reads GLLLMYLAVGIFVFSALGYTM. The Extracellular portion of the chain corresponds to 346 to 357; the sequence is EQSHPETLFKSI. The segment at residues 358 to 378 is an intramembrane region (pore-forming); sequence PQSFWWAIITMTTVGYGDIYP. A Selectivity filter motif is present at residues 370-375; it reads TVGYGD. Residues 379-385 lie on the Extracellular side of the membrane; the sequence is KTTLGKL. A helical membrane pass occupies residues 386–406; the sequence is NAAISFLCGVIAIALPIHPII. Over 407–493 the chain is Cytoplasmic; sequence NNFVRYYNKQ…HHRTRLQSCK (87 aa). The tract at residues 433 to 468 is disordered; it reads NSSSAESKPGGSRSDLDTLPPEPAAREGPSWGSRLK.

This sequence belongs to the potassium channel family. F (TC 1.A.1.2) subfamily. Kv5.1/KCNF1 sub-subfamily. In terms of assembly, heterotetramer with KCNB1 or KCNB2. As to expression, expressed in brain namely in the piriform cortex, olfactory tubercle, and medial habenular nucleus. Also expressed in the medial amygdaloid nuclei and the lateral amygdaloid area.

It is found in the cell membrane. In terms of biological role, regulatory alpha-subunit of the voltage-gated potassium (Kv) channel which, when coassembled with KCNB1 or KCNB2, can modulate their expression and their gating kinetics by acting on deactivation upon repolarization and inactivation during maintained depolarization. Accelerates inactivation but has relatively little effect on deactivation. Coexpression with KCNB1 or KCNB2 markedly slows inactivation. Each modulatory subunit has its own specific properties of regulation, and can lead to extensive inhibitions, to large changes in kinetics, and/or to large shifts in the voltage dependencies of the inactivation process. The gating kinetics depends on the nature and stoichiometry of the associated regulatory sunbunit. Fails to produce a potassium current when expressed alone. The polypeptide is Voltage-gated potassium channel regulatory subunit KCNF1 (Rattus norvegicus (Rat)).